Reading from the N-terminus, the 366-residue chain is Sec-independent protein translocase protein TatC (366 aa).

Transmembrane regions (helical) follow at residues 42-62, 70-90, 97-117, 134-154, 179-199, 207-227, and 230-250; these read VLAV…LFTM, HMPA…FIPL, AVFI…APGL, ILFY…VFGF, LFFA…LVIV, LAGF…ILTP, and VLSQ…GLFV. Residues 266–279 are compositionally biased toward acidic residues; sequence EAEESGAADDESDE. The segment at 266–366 is disordered; that stretch reads EAEESGAADD…PSPKKPDSPV (101 aa). Composition is skewed to basic and acidic residues over residues 281–290 and 301–318; these read VSARHAEYEA and DMDK…RLES. Over residues 319–333 the composition is skewed to polar residues; that stretch reads DSSASDDGPESNTAG.

Belongs to the TatC family. The Tat system comprises two distinct complexes: a TatABC complex, containing multiple copies of TatA, TatB and TatC subunits, and a separate TatA complex, containing only TatA subunits. Substrates initially bind to the TatABC complex, which probably triggers association of the separate TatA complex to form the active translocon.

The protein localises to the cell inner membrane. Its function is as follows. Part of the twin-arginine translocation (Tat) system that transports large folded proteins containing a characteristic twin-arginine motif in their signal peptide across membranes. Together with TatB, TatC is part of a receptor directly interacting with Tat signal peptides. The protein is Sec-independent protein translocase protein TatC of Halothiobacillus neapolitanus (strain ATCC 23641 / c2) (Thiobacillus neapolitanus).